The primary structure comprises 342 residues: S-adenosylmethionine:tRNA ribosyltransferase-isomerase (342 aa).

This sequence belongs to the QueA family. In terms of assembly, monomer.

It localises to the cytoplasm. The enzyme catalyses 7-aminomethyl-7-carbaguanosine(34) in tRNA + S-adenosyl-L-methionine = epoxyqueuosine(34) in tRNA + adenine + L-methionine + 2 H(+). It functions in the pathway tRNA modification; tRNA-queuosine biosynthesis. Its function is as follows. Transfers and isomerizes the ribose moiety from AdoMet to the 7-aminomethyl group of 7-deazaguanine (preQ1-tRNA) to give epoxyqueuosine (oQ-tRNA). This is S-adenosylmethionine:tRNA ribosyltransferase-isomerase from Moorella thermoacetica (strain ATCC 39073 / JCM 9320).